Consider the following 117-residue polypeptide: G antigen 5 (117 aa).

Residues 1–117 are disordered; sequence MSWRGRSTYY…PEEGEKQSQC (117 aa). Acidic residues-rich tracts occupy residues 32–45 and 87–96; these read FSDEVEPATPEEGE and ECEDGPDGQE. Residues 103-117 show a composition bias toward basic and acidic residues; sequence EEVKTPEEGEKQSQC.

It belongs to the GAGE family. Expressed in a variety of tumor tissues but not in normal tissues, except testis.

This chain is G antigen 5 (GAGE5), found in Homo sapiens (Human).